The chain runs to 204 residues: Urease accessory protein UreG (204 aa).

Position 12 to 19 (12 to 19 (GPVGSGKT)) interacts with GTP.

This sequence belongs to the SIMIBI class G3E GTPase family. UreG subfamily. Homodimer. UreD, UreF and UreG form a complex that acts as a GTP-hydrolysis-dependent molecular chaperone, activating the urease apoprotein by helping to assemble the nickel containing metallocenter of UreC. The UreE protein probably delivers the nickel.

It localises to the cytoplasm. Facilitates the functional incorporation of the urease nickel metallocenter. This process requires GTP hydrolysis, probably effectuated by UreG. This is Urease accessory protein UreG from Pseudomonas fluorescens (strain ATCC BAA-477 / NRRL B-23932 / Pf-5).